Here is a 493-residue protein sequence, read N- to C-terminus: E3 ubiquitin-protein ligase Hakai (493 aa).

Disordered regions lie at residues 1–20 (MDHN…LGGL) and 28–61 (IKLI…GDEE). Polar residues predominate over residues 7-16 (DLQGTNSSAS). The segment at 109–149 (CDKCGLPIKMYGRMIPCKHVFCYDCAILHEKKGDKMCPGCN) adopts an RING-type zinc-finger fold. Residues 148-206 (CNEPVQRIEQCVRGSLFMCSIVQGCKRTYLSQRDLQAHINHRHMRAGKPVTRPPLEPVH) form an HYB domain region. The C2H2-type zinc-finger motif lies at 164 to 190 (FMCSIVQGCKRTYLSQRDLQAHINHRH). The tract at residues 253–493 (YNQPHEDIRP…DQARYRPYYQ (241 aa)) is disordered. Composition is skewed to pro residues over residues 262-276 (PPPA…PPRP), 342-352 (APPPPPPPPIS), 372-389 (APPP…PPPG), and 399-412 (MNHP…PQHG). The span at 427–444 (NPNSLPQFSEDQGTLSPP) shows a compositional bias: polar residues. A compositionally biased stretch (pro residues) spans 459-469 (PRGPPPPPRMQ). Over residues 470-480 (GPPAQAPLAGP) the composition is skewed to low complexity.

This sequence belongs to the Hakai family. Homodimer. Interacts with tyrosine-phosphorylated SRC substrates. Component of the WMM complex, a N6-methyltransferase complex composed of a catalytic subcomplex, named MAC, and of an associated subcomplex, named MACOM. Component of the MACOM subcomplex.

It localises to the nucleus speckle. It is found in the nucleus. Its subcellular location is the nucleoplasm. The enzyme catalyses S-ubiquitinyl-[E2 ubiquitin-conjugating enzyme]-L-cysteine + [acceptor protein]-L-lysine = [E2 ubiquitin-conjugating enzyme]-L-cysteine + N(6)-ubiquitinyl-[acceptor protein]-L-lysine.. It participates in protein modification; protein ubiquitination. E3 ubiquitin-protein ligase that mediates ubiquitination of several tyrosine-phosphorylated Src substrates. Associated component of the WMM complex, a complex that mediates N6-methyladenosine (m6A) methylation of RNAs, a modification that plays a role in the efficiency of mRNA splicing and RNA processing. This is E3 ubiquitin-protein ligase Hakai from Gallus gallus (Chicken).